The chain runs to 320 residues: Polynucleotide 5'-triphosphatase CTL1 (320 aa).

The span at 1–12 (MSDQPETPSNSR) shows a compositional bias: polar residues. Positions 1–23 (MSDQPETPSNSRNSHENVGAKKA) are disordered. Residues 13–23 (NSHENVGAKKA) show a composition bias toward basic and acidic residues.

This sequence belongs to the fungal TPase family. Mg(2+) serves as cofactor. The cofactor is Mn(2+).

Its subcellular location is the cytoplasm. It is found in the nucleus. It carries out the reaction a 5'-end triphospho-ribonucleoside in mRNA + H2O = a 5'-end diphospho-ribonucleoside in mRNA + phosphate + H(+). Its function is as follows. Probably involved in an RNA processing event other than mRNA capping. Releases gamma-phosphate from the 5'-end of RNA to produce a diphosphate terminus. This Saccharomyces cerevisiae (strain ATCC 204508 / S288c) (Baker's yeast) protein is Polynucleotide 5'-triphosphatase CTL1.